Here is a 106-residue protein sequence, read N- to C-terminus: L-rhamnose mutarotase (106 aa).

Y20 provides a ligand contact to substrate. H24 serves as the catalytic Proton donor. Substrate contacts are provided by residues Y43 and 78–79 (WW).

The protein belongs to the rhamnose mutarotase family. As to quaternary structure, homodimer.

The protein localises to the cytoplasm. The catalysed reaction is alpha-L-rhamnose = beta-L-rhamnose. It functions in the pathway carbohydrate degradation; L-rhamnose degradation. Involved in the anomeric conversion of L-rhamnose. The chain is L-rhamnose mutarotase (rhaM) from Rhizobium leguminosarum bv. trifolii.